Here is a 306-residue protein sequence, read N- to C-terminus: Arylesterase (306 aa).

Residues 82–84 (HGG) carry the Involved in the stabilization of the negatively charged intermediate by the formation of the oxyanion hole motif. Active-site residues include Ser156, Asp251, and His281.

As to quaternary structure, monomer.

The enzyme catalyses a phenyl acetate + H2O = a phenol + acetate + H(+). The catalysed reaction is An aryl dialkyl phosphate + H2O = dialkyl phosphate + an aryl alcohol.. Its activity is regulated as follows. Completely inhibited by chemical modifiers that are specific to Cys (HgCl(2) and p-chloromercuribenzoic acid), His (diethyl pyrocarbonate) and Ser (diisopropyl fluorophosphate and phenylmethanesulfonyl fluoride). No significant effect with chemical modifiers specific to Lys (pyridoxal 5'-phosphate) and Arg (phenylglyoxal). Not inhibited by inhibitors of A-esterases (paraoxon) or C-esterases (physostigmine/eserine). Activity is also not effected by incubation with 5 mM divalent cations for 30 minutes at 30 degrees Celsius or with 10 mM EDTA for 60 minutes at 75 degrees Celsius. Functionally, has a broad substrate specificity. Hydrolyzes various p-nitrophenyl phosphates, aromatic esters and p-nitrophenyl fatty acids in vitro. Most active against paraoxon, phenyl acetate and p-nitrophenyl caproate (C6), respectively. Also has tributyrinase activity, but shows no hydrolytic activity toward other triacylglycerols including tricaprylin, trimyristin, tripalmitin or triolein in vitro. The chain is Arylesterase from Saccharolobus solfataricus (Sulfolobus solfataricus).